Here is a 384-residue protein sequence, read N- to C-terminus: MAFSERTRAARPLSDTTLAYFPDARFAPSDRDRAARVRCTYQCSHTRSWRAVAVSDNDSRYGHIPVMLDRCYELLAPALTADSTDGSGAVLVDATLGAGGHTEHFLTMLPGLTVIGLDRDTNALDIARSRLAPFGTRFVGVHTRYDGLADALDGLGYRTTSSVDGVLFDLGVSSMQLDQAERGFAYSVDAPLDMRMNAQDELTAADILNTYSAVELSRVLSRFGEERFARRIADEIVRRRANEPFTRSGQLVELLYATIPAATRRTGGHPAKRTFQALRIAVNAELESLATAIPAAMAALRPGGRVAVMAYQSLEDKIVKAEFAAATASRSPIDLPVELPGDAPEFTAITRGAERANDEEIEVNPRSAPVRLRAVERVADRRNA.

S-adenosyl-L-methionine is bound by residues 99-101 (GGH), D118, Y145, D169, and Q176.

Belongs to the methyltransferase superfamily. RsmH family.

The protein localises to the cytoplasm. It catalyses the reaction cytidine(1402) in 16S rRNA + S-adenosyl-L-methionine = N(4)-methylcytidine(1402) in 16S rRNA + S-adenosyl-L-homocysteine + H(+). Functionally, specifically methylates the N4 position of cytidine in position 1402 (C1402) of 16S rRNA. The sequence is that of Ribosomal RNA small subunit methyltransferase H from Mycobacteroides abscessus (strain ATCC 19977 / DSM 44196 / CCUG 20993 / CIP 104536 / JCM 13569 / NCTC 13031 / TMC 1543 / L948) (Mycobacterium abscessus).